The primary structure comprises 201 residues: CASP-like protein 1F2 (201 aa).

Over 1-29 (MITSIATTTAGAFEVKSLGFIPYPSQPKR) the chain is Cytoplasmic. Residues 30–50 (IFFMAQVIFRILAIAFAVASI) traverse the membrane as a helical segment. Residues 51–78 (SAMVTSDQNVIVFGMDTAARYSYSSAFR) are Extracellular-facing. The helical transmembrane segment at 79 to 99 (FLVGANAVVCGFSVLSLIFVC) threads the bilayer. Residues 100–119 (LMSRRSEAILEKNYYLFLHD) are Cytoplasmic-facing. Residues 120–140 (MVMMVMMVSGCSAATAIGYVG) form a helical membrane-spanning segment. The Extracellular portion of the chain corresponds to 141 to 162 (RYGEKEITWTAVCDFVGKFCNQ). A helical membrane pass occupies residues 163–183 (ALVSIVLAYLALFCYVALTTL). The Cytoplasmic portion of the chain corresponds to 184-201 (AAHKLNHSSSTAAIRQNE).

Belongs to the Casparian strip membrane proteins (CASP) family. As to quaternary structure, homodimer and heterodimers.

It is found in the cell membrane. The protein is CASP-like protein 1F2 of Ricinus communis (Castor bean).